We begin with the raw amino-acid sequence, 378 residues long: Erythronate-4-phosphate dehydrogenase (378 aa).

2 residues coordinate substrate: serine 45 and threonine 66. Aspartate 146 and threonine 175 together coordinate NAD(+). Arginine 208 is a catalytic residue. Aspartate 232 is a binding site for NAD(+). The active site involves glutamate 237. Histidine 254 functions as the Proton donor in the catalytic mechanism. Glycine 257 is a binding site for NAD(+). Tyrosine 258 contacts substrate.

This sequence belongs to the D-isomer specific 2-hydroxyacid dehydrogenase family. PdxB subfamily. In terms of assembly, homodimer.

The protein localises to the cytoplasm. It carries out the reaction 4-phospho-D-erythronate + NAD(+) = (R)-3-hydroxy-2-oxo-4-phosphooxybutanoate + NADH + H(+). Its pathway is cofactor biosynthesis; pyridoxine 5'-phosphate biosynthesis; pyridoxine 5'-phosphate from D-erythrose 4-phosphate: step 2/5. Catalyzes the oxidation of erythronate-4-phosphate to 3-hydroxy-2-oxo-4-phosphonooxybutanoate. This chain is Erythronate-4-phosphate dehydrogenase, found in Escherichia coli O6:K15:H31 (strain 536 / UPEC).